The sequence spans 513 residues: ATP synthase subunit alpha (513 aa).

169–176 (GDRQCGKT) is an ATP binding site.

It belongs to the ATPase alpha/beta chains family. As to quaternary structure, F-type ATPases have 2 components, CF(1) - the catalytic core - and CF(0) - the membrane proton channel. CF(1) has five subunits: alpha(3), beta(3), gamma(1), delta(1), epsilon(1). CF(0) has three main subunits: a(1), b(2) and c(9-12). The alpha and beta chains form an alternating ring which encloses part of the gamma chain. CF(1) is attached to CF(0) by a central stalk formed by the gamma and epsilon chains, while a peripheral stalk is formed by the delta and b chains.

Its subcellular location is the cell inner membrane. The enzyme catalyses ATP + H2O + 4 H(+)(in) = ADP + phosphate + 5 H(+)(out). In terms of biological role, produces ATP from ADP in the presence of a proton gradient across the membrane. The alpha chain is a regulatory subunit. This Burkholderia ambifaria (strain MC40-6) protein is ATP synthase subunit alpha.